The chain runs to 363 residues: NAD-dependent epimerase/dehydratase tndE (363 aa).

A helical membrane pass occupies residues 10–30 (GLVLITGVNGFLASHLALQLI). Tyrosine 176 is a binding site for NADP(+).

The protein belongs to the NAD(P)-dependent epimerase/dehydratase family. Dihydroflavonol-4-reductase subfamily.

It is found in the membrane. The protein operates within secondary metabolite biosynthesis; terpenoid biosynthesis. Functionally, NAD-dependent epimerase/dehydratase; part of the gene cluster that mediates the biosynthesis of talaronoid C, a fusicoccane diterpenoid with an unprecedented tricyclic 5/8/6 ring system. The first step in the pathway is performed by the fusicoccadiene synthase tndC that possesses both prenyl transferase and terpene cyclase activity, converting isopentenyl diphosphate and dimethylallyl diphosphate into geranylgeranyl diphosphate (GGDP) and further converting GGDP into talarodiene, a precursor for talaronoid C. The remaining enzymes from the cluster include the cytochrome P450 monooxygenase tndB, the aldehyde reductase tndE and the alcohol dehydrogenase tndF that are involved in the conversion of talarodiene into talaronoid C. In Aspergillus flavipes, this protein is NAD-dependent epimerase/dehydratase tndE.